The chain runs to 630 residues: tRNA uridine 5-carboxymethylaminomethyl modification enzyme MnmG (630 aa).

FAD contacts are provided by residues 13 to 18 (GGGHAG), Val125, and Ser180. 273–287 (GPRYCPSIEDKIHRF) contacts NAD(+). Gln370 contributes to the FAD binding site.

The protein belongs to the MnmG family. In terms of assembly, homodimer. Heterotetramer of two MnmE and two MnmG subunits. FAD is required as a cofactor.

It localises to the cytoplasm. In terms of biological role, NAD-binding protein involved in the addition of a carboxymethylaminomethyl (cmnm) group at the wobble position (U34) of certain tRNAs, forming tRNA-cmnm(5)s(2)U34. The protein is tRNA uridine 5-carboxymethylaminomethyl modification enzyme MnmG of Shewanella woodyi (strain ATCC 51908 / MS32).